Consider the following 654-residue polypeptide: Fructose-1,6-bisphosphatase class 3 (654 aa).

Belongs to the FBPase class 3 family. Requires Mn(2+) as cofactor.

The enzyme catalyses beta-D-fructose 1,6-bisphosphate + H2O = beta-D-fructose 6-phosphate + phosphate. It participates in carbohydrate biosynthesis; gluconeogenesis. In Staphylococcus epidermidis (strain ATCC 35984 / DSM 28319 / BCRC 17069 / CCUG 31568 / BM 3577 / RP62A), this protein is Fructose-1,6-bisphosphatase class 3.